We begin with the raw amino-acid sequence, 908 residues long: Metabotropic glutamate receptor 8 (908 aa).

The signal sequence occupies residues 1-33; the sequence is MVCEGKRSASCPCFFLLTAKFYWILTMMQRTHS. Residues 34-583 lie on the Extracellular side of the membrane; it reads QEYAHSIRVD…IIKLEWHSPW (550 aa). Cys-64 and Cys-106 form a disulfide bridge. A glycan (N-linked (GlcNAc...) asparagine) is linked at Asn-95. Residues Ser-156, 177–179, and Tyr-227 contribute to the L-glutamate site; that span reads AST. Intrachain disulfides connect Cys-246–Cys-534, Cys-369–Cys-384, Cys-424–Cys-431, Cys-516–Cys-535, Cys-520–Cys-538, Cys-541–Cys-553, and Cys-556–Cys-569. A glycan (N-linked (GlcNAc...) asparagine) is linked at Asn-298. Asp-309 lines the L-glutamate pocket. Lys-401 is an L-glutamate binding site. 2 N-linked (GlcNAc...) asparagine glycosylation sites follow: Asn-452 and Asn-480. An N-linked (GlcNAc...) asparagine glycan is attached at Asn-565. Residues 584 to 608 form a helical membrane-spanning segment; it reads AVVPVFVAILGIIATTFVIVTFVRY. Over 609-620 the chain is Cytoplasmic; it reads NDTPIVRASGRE. The chain crosses the membrane as a helical span at residues 621–641; sequence LSYVLLTGIFLCYSITFLMIA. Residues 642 to 647 are Extracellular-facing; it reads APDTII. The helical transmembrane segment at 648 to 668 threads the bilayer; that stretch reads CSFRRVFLGLGMCFSYAALLT. Over 669 to 695 the chain is Cytoplasmic; sequence KTNRIHRIFEQGKKSVTAPKFISPASQ. A helical membrane pass occupies residues 696 to 716; it reads LVITFSLISVQLLGVFVWFVV. Residues 717–746 lie on the Extracellular side of the membrane; that stretch reads DPPHIIIDYGEQRTLDPEKARGVLKCDISD. Residues 747–768 form a helical membrane-spanning segment; sequence LSLICSLGYSILLMVTCTVYAI. Topologically, residues 769-781 are cytoplasmic; sequence KTRGVPETFNEAK. Residues 782–803 traverse the membrane as a helical segment; that stretch reads PIGFTMYTTCIIWLAFIPIFFG. Topologically, residues 804–818 are extracellular; it reads TAQSAEKMYIQTTTL. A helical membrane pass occupies residues 819 to 843; that stretch reads TVSMSLSASVSLGMLYMPKVYIIIF. At 844 to 908 the chain is on the cytoplasmic side; that stretch reads HPEQNVQKRK…TYISYSNHSI (65 aa). Lys-882 is covalently cross-linked (Glycyl lysine isopeptide (Lys-Gly) (interchain with G-Cter in SUMO1)).

This sequence belongs to the G-protein coupled receptor 3 family. As to quaternary structure, interacts with PICK1.

The protein resides in the cell membrane. Functionally, G-protein coupled receptor for glutamate. Ligand binding causes a conformation change that triggers signaling via guanine nucleotide-binding proteins (G proteins) and modulates the activity of down-stream effectors, such as adenylate cyclase. Signaling inhibits adenylate cyclase activity. This chain is Metabotropic glutamate receptor 8 (GRM8), found in Homo sapiens (Human).